Reading from the N-terminus, the 312-residue chain is Ribosomal RNA small subunit methyltransferase H (312 aa).

Residues 35–37 (GGH), Asp55, Phe80, Asp102, and Gln109 each bind S-adenosyl-L-methionine.

Belongs to the methyltransferase superfamily. RsmH family.

Its subcellular location is the cytoplasm. The catalysed reaction is cytidine(1402) in 16S rRNA + S-adenosyl-L-methionine = N(4)-methylcytidine(1402) in 16S rRNA + S-adenosyl-L-homocysteine + H(+). Its function is as follows. Specifically methylates the N4 position of cytidine in position 1402 (C1402) of 16S rRNA. This is Ribosomal RNA small subunit methyltransferase H from Pseudoalteromonas translucida (strain TAC 125).